Here is a 107-residue protein sequence, read N- to C-terminus: Auxin-responsive protein SAUR50 (107 aa).

Belongs to the ARG7 family. Interacts with BZR1. Expressed in cotyledons, leaves, flowers and siliques.

The protein resides in the cell membrane. Functionally, provide a mechanistic link between auxin and plasma membrane H(+)-ATPases (PM H(+)-ATPases, e.g. AHA1 and AHA2), and triggers PM H(+)-ATPases activity by promoting phosphorylation of their C-terminal autoinhibitory domain as a result of PP2C-D subfamily of type 2C phosphatases inhibition, thus leading to the acidification of the apoplast and the facilitation of solutes and water uptake to drive cell expansion. Triggers plant growth probably by promoting cell elongation. Regulates branch angles and bending. Effector of hormonal and environmental signals in plant growth. This chain is Auxin-responsive protein SAUR50, found in Arabidopsis thaliana (Mouse-ear cress).